The primary structure comprises 568 residues: CDK5 and ABL1 enzyme substrate 1 (568 aa).

The span at 1–31 shows a compositional bias: low complexity; sequence MAAATATAGTAACSSSSSSRGGSTDAAATSG. Disordered regions lie at residues 1 to 94 and 130 to 169; these read MAAA…PGAR and PSLV…QEEL. The tract at residues 1-98 is interaction with TDRD7; it reads MAAATATAGT…TKPGARARLS (98 aa). Residues 33 to 45 show a composition bias toward pro residues; the sequence is QPPPPPPATAPPE. The segment covering 46–56 has biased composition (basic and acidic residues); it reads PLRKPRMDPRR. The segment at 140-427 is interaction with CDK3; it reads PSQPPRSAPA…TTVIDYVKPS (288 aa). S248 bears the Phosphoserine mark. S274 is modified (phosphoserine; by CDK2 and CDK3). At T350 the chain carries Phosphothreonine.

The protein belongs to the cyclin family. Found in a complex with p53/TP53. Found in a number of complexes with CDK2, CDK3, CDK5, ABL1, TDRD7, CDK17, CCNA1, CCNE1 and TP73. Interacts with CDK2, CDK3, CDK5, ABL1 and TDRD7. Phosphorylated on Ser-274 by CCNE1/CDK3. Phosphorylated on serine/threonine residues by CDK5 and on tyrosine residues by ABL1. Also phosphorylated in vitro by CCNA1/CDK2, CCNE1/CDK2, CCNA1/CDK3 and CCNE1/CDK3. As to expression, ubiquitous. Expressed in postnatal day 1 (P1), in postmitotic neurons of the subplate, cortex (V/VI) and marginal zone; in postnatal day 7 (P7), in all layers of the cerebral cortex and in the CA1 and CA2 regions of the hippocampus (at protein level). Highly expressed in brain, kidney, liver and lung.

The protein localises to the nucleus. Its subcellular location is the cytoplasm. It localises to the cell projection. It is found in the growth cone. In terms of biological role, cyclin-dependent kinase binding protein. Enhances cyclin-dependent kinase tyrosine phosphorylation by nonreceptor tyrosine kinases, such as that of CDK5 by activated ABL1, which leads to increased CDK5 activity and is critical for neuronal development, and that of CDK2 by WEE1, which leads to decreased CDK2 activity and growth inhibition. Positively affects neuronal outgrowth. Plays a role as a regulator for p53/p73-induced cell death. The polypeptide is CDK5 and ABL1 enzyme substrate 1 (Cables1) (Mus musculus (Mouse)).